We begin with the raw amino-acid sequence, 1527 residues long: uncharacterized protein (1527 aa).

Coiled coils occupy residues 262–293, 699–751, 905–932, and 1217–1255; these read NVEISRDKIKKLKDKNEIFNQLINEFGENINE, QQQQ…SEKL, NNLNIINNNQENNNNNNNDLKETIENQI, and KIISSELELEQQQQQQQQQQQQQQQQQQQQQQQQQQKSS. Residues 683-734 are disordered; it reads TNQEQEQDQQDQPPPPQQQQEQQQEQQQQQEQQQQQDQQQQDQQQDQQEKQQ. The span at 700–728 shows a compositional bias: low complexity; the sequence is QQQEQQQEQQQQQEQQQQQDQQQQDQQQD.

This is an uncharacterized protein from Dictyostelium discoideum (Social amoeba).